Consider the following 177-residue polypeptide: Large ribosomal subunit protein uL10 (177 aa).

It belongs to the universal ribosomal protein uL10 family. As to quaternary structure, part of the ribosomal stalk of the 50S ribosomal subunit. The N-terminus interacts with L11 and the large rRNA to form the base of the stalk. The C-terminus forms an elongated spine to which L12 dimers bind in a sequential fashion forming a multimeric L10(L12)X complex.

Functionally, forms part of the ribosomal stalk, playing a central role in the interaction of the ribosome with GTP-bound translation factors. This chain is Large ribosomal subunit protein uL10, found in Xanthomonas axonopodis pv. citri (strain 306).